Here is a 393-residue protein sequence, read N- to C-terminus: Serine/threonine-protein kinase US3 homolog (393 aa).

Residues 93-378 form the Protein kinase domain; sequence FVILKTFTPG…AEVLLNHSVF (286 aa). Residues 99–107 and Lys122 contribute to the ATP site; that span reads FTPGAEGFA. Catalysis depends on Asp206, which acts as the Proton acceptor.

The protein belongs to the protein kinase superfamily. Ser/Thr protein kinase family. In terms of processing, phosphorylated by ORF47; this phosphorylation regulates subsequent phosphorylation of proteins 24 and 27 by ORF66. Autophosphorylated.

It localises to the host cytoplasm. Its subcellular location is the host nucleus. The enzyme catalyses L-seryl-[protein] + ATP = O-phospho-L-seryl-[protein] + ADP + H(+). The catalysed reaction is L-threonyl-[protein] + ATP = O-phospho-L-threonyl-[protein] + ADP + H(+). Its function is as follows. Multifunctional serine/threonine kinase that plays a role in several processes including egress of virus particles from the nucleus, modulation of the actin cytoskeleton and inhibition of apoptosis. Phosphorylates proteins 24 and 27, two critical regulators of capsid budding from nucleus to endoplasmic reticulum, thereby facilitating virion egress. Modulates and redistributes host components of the nuclear envelope, including LMNA, emerin/EMD and the nuclear matrix protein MATR3. Phosphorylates envelope glycoprotein B (gB), probably to direct it to the cell surface. Promotes virus intracellular spread by restructuring host cell cytoskeleton. Blocks host apoptosis to extend cell survival and allow efficient viral replication. Promotes viral gene expression by phosphorylating host HDAC2 to reduce viral genome silencing. Down-regulates class I major histocompatibility complex (MHC-I) surface expression. Additionally, phosphorylates IE62 and targets it to the cytoplasm. The nuclear exclusion of IE62 enables the packaging of abundant levels of IE62 into virions. This Varicella-zoster virus (strain Dumas) (HHV-3) protein is Serine/threonine-protein kinase US3 homolog (66).